The chain runs to 136 residues: Transport protein particle 20 kDa subunit (136 aa).

It belongs to the TRAPP small subunits family. Sedlin subfamily.

The protein localises to the cytoplasm. Its subcellular location is the golgi apparatus. It localises to the cis-Golgi network. The protein resides in the endoplasmic reticulum. Its function is as follows. Component of the TRAPP I and TRAPP II complexes. TRAPP I plays a key role in the late stages of endoplasmic reticulum to Golgi traffic. TRAPP II seems to play a role in intra-Golgi transport. The polypeptide is Transport protein particle 20 kDa subunit (trs20) (Schizosaccharomyces pombe (strain 972 / ATCC 24843) (Fission yeast)).